Consider the following 430-residue polypeptide: Serine--tRNA ligase (430 aa).

Polar residues predominate over residues 45–58 (ENLQAERNSRSKSI). The disordered stretch occupies residues 45 to 65 (ENLQAERNSRSKSIGQAKARG). 237 to 239 (TSE) is a binding site for L-serine. 268-270 (RSE) is a binding site for ATP. E291 contacts L-serine. 355–358 (EISS) lines the ATP pocket. S391 contributes to the L-serine binding site.

The protein belongs to the class-II aminoacyl-tRNA synthetase family. Type-1 seryl-tRNA synthetase subfamily. As to quaternary structure, homodimer. The tRNA molecule binds across the dimer.

Its subcellular location is the cytoplasm. The catalysed reaction is tRNA(Ser) + L-serine + ATP = L-seryl-tRNA(Ser) + AMP + diphosphate + H(+). It carries out the reaction tRNA(Sec) + L-serine + ATP = L-seryl-tRNA(Sec) + AMP + diphosphate + H(+). Its pathway is aminoacyl-tRNA biosynthesis; selenocysteinyl-tRNA(Sec) biosynthesis; L-seryl-tRNA(Sec) from L-serine and tRNA(Sec): step 1/1. In terms of biological role, catalyzes the attachment of serine to tRNA(Ser). Is also able to aminoacylate tRNA(Sec) with serine, to form the misacylated tRNA L-seryl-tRNA(Sec), which will be further converted into selenocysteinyl-tRNA(Sec). This is Serine--tRNA ligase from Erwinia tasmaniensis (strain DSM 17950 / CFBP 7177 / CIP 109463 / NCPPB 4357 / Et1/99).